The sequence spans 300 residues: Ribosomal protein L11 methyltransferase (300 aa).

S-adenosyl-L-methionine contacts are provided by Thr-152, Gly-173, Asp-195, and Asn-234.

Belongs to the methyltransferase superfamily. PrmA family.

Its subcellular location is the cytoplasm. It catalyses the reaction L-lysyl-[protein] + 3 S-adenosyl-L-methionine = N(6),N(6),N(6)-trimethyl-L-lysyl-[protein] + 3 S-adenosyl-L-homocysteine + 3 H(+). In terms of biological role, methylates ribosomal protein L11. In Burkholderia mallei (strain NCTC 10247), this protein is Ribosomal protein L11 methyltransferase.